We begin with the raw amino-acid sequence, 615 residues long: Fibrinogen alpha chain (615 aa).

The N-terminal stretch at 1–19 (MFSVRDLCLVLSLVGAIKT) is a signal peptide. Positions 71-602 (CRMKGLIDEV…GHTKARPARG (532 aa)) form a coiled coil. The interval 267–427 (FGGDGHARGD…TKQEFHTGKL (161 aa)) is disordered. A compositionally biased stretch (polar residues) spans 293-302 (GTSSIGNVNP). T325 carries an O-linked (GalNAc...) threonine glycan. Low complexity predominate over residues 373 to 396 (GSAGTWNTGSSGSSSFRPDSSGHG). The cysteines at positions 455 and 485 are disulfide-linked. The disordered stretch occupies residues 530-615 (EFAALGESGS…SPLGEPSLTP (86 aa)). Residues 537 to 549 (SGSSSSKTSTHSK) show a composition bias toward low complexity. Positions 550-560 (QFVSSSTTVNR) are enriched in polar residues. The span at 591–601 (QKGHTKARPAR) shows a compositional bias: basic residues.

As to quaternary structure, heterohexamer; disulfide linked. Contains 2 sets of 3 non-identical chains (alpha, beta and gamma). The 2 heterotrimers are in head to head conformation with the N-termini in a small central domain. Post-translationally, conversion of fibrinogen to fibrin is triggered by thrombin, which cleaves fibrinopeptides A and B from alpha and beta chains, and thus exposes the N-terminal polymerization sites responsible for the formation of the soft clot. The soft clot is converted into the hard clot by factor XIIIA which catalyzes the epsilon-(gamma-glutamyl)lysine cross-linking between gamma chains (stronger) and between alpha chains (weaker) of different monomers. Forms F13A-mediated cross-links between a glutamine and the epsilon-amino group of a lysine residue, forming fibronectin-fibrinogen heteropolymers.

It is found in the secreted. In terms of biological role, cleaved by the protease thrombin to yield monomers which, together with fibrinogen beta (FGB) and fibrinogen gamma (FGG), polymerize to form an insoluble fibrin matrix. Fibrin has a major function in hemostasis as one of the primary components of blood clots. In addition, functions during the early stages of wound repair to stabilize the lesion and guide cell migration during re-epithelialization. Was originally thought to be essential for platelet aggregation, based on in vitro studies using anticoagulated blood. However, subsequent studies have shown that it is not absolutely required for thrombus formation in vivo. Enhances expression of SELP in activated platelets via an ITGB3-dependent pathway. Maternal fibrinogen is essential for successful pregnancy. Fibrin deposition is also associated with infection, where it protects against IFNG-mediated hemorrhage. May also facilitate the immune response via both innate and T-cell mediated pathways. The protein is Fibrinogen alpha chain (FGA) of Bos taurus (Bovine).